A 353-amino-acid chain; its full sequence is UDP-N-acetylglucosamine--N-acetylmuramyl-(pentapeptide) pyrophosphoryl-undecaprenol N-acetylglucosamine transferase (353 aa).

Residues 10–12 (TGG), asparagine 124, serine 183, and glutamine 283 contribute to the UDP-N-acetyl-alpha-D-glucosamine site.

It belongs to the glycosyltransferase 28 family. MurG subfamily.

It is found in the cell inner membrane. It catalyses the reaction di-trans,octa-cis-undecaprenyl diphospho-N-acetyl-alpha-D-muramoyl-L-alanyl-D-glutamyl-meso-2,6-diaminopimeloyl-D-alanyl-D-alanine + UDP-N-acetyl-alpha-D-glucosamine = di-trans,octa-cis-undecaprenyl diphospho-[N-acetyl-alpha-D-glucosaminyl-(1-&gt;4)]-N-acetyl-alpha-D-muramoyl-L-alanyl-D-glutamyl-meso-2,6-diaminopimeloyl-D-alanyl-D-alanine + UDP + H(+). It functions in the pathway cell wall biogenesis; peptidoglycan biosynthesis. Functionally, cell wall formation. Catalyzes the transfer of a GlcNAc subunit on undecaprenyl-pyrophosphoryl-MurNAc-pentapeptide (lipid intermediate I) to form undecaprenyl-pyrophosphoryl-MurNAc-(pentapeptide)GlcNAc (lipid intermediate II). The chain is UDP-N-acetylglucosamine--N-acetylmuramyl-(pentapeptide) pyrophosphoryl-undecaprenol N-acetylglucosamine transferase from Helicobacter pylori (strain G27).